Consider the following 183-residue polypeptide: Cell division protein SepF (183 aa).

The segment at 149–183 is disordered; it reads SSEESAAPSVMAREEEATAPAAPSPAWGTQDAING.

Belongs to the SepF family. Homodimer. Interacts with FtsZ.

It is found in the cytoplasm. Cell division protein that is part of the divisome complex and is recruited early to the Z-ring. Probably stimulates Z-ring formation, perhaps through the cross-linking of FtsZ protofilaments. Its function overlaps with FtsA. This is Cell division protein SepF from Synechococcus sp. (strain RCC307).